A 489-amino-acid polypeptide reads, in one-letter code: UDP-N-acetylmuramoylalanine--D-glutamate ligase (489 aa).

Position 126 to 132 (126 to 132 (GTNGKTT)) interacts with ATP.

Belongs to the MurCDEF family.

Its subcellular location is the cytoplasm. The enzyme catalyses UDP-N-acetyl-alpha-D-muramoyl-L-alanine + D-glutamate + ATP = UDP-N-acetyl-alpha-D-muramoyl-L-alanyl-D-glutamate + ADP + phosphate + H(+). Its pathway is cell wall biogenesis; peptidoglycan biosynthesis. Functionally, cell wall formation. Catalyzes the addition of glutamate to the nucleotide precursor UDP-N-acetylmuramoyl-L-alanine (UMA). The sequence is that of UDP-N-acetylmuramoylalanine--D-glutamate ligase from Mycobacterium avium (strain 104).